The primary structure comprises 599 residues: Aspartate--tRNA ligase (599 aa).

An L-aspartate-binding site is contributed by glutamate 180. Residues 204–207 are aspartate; that stretch reads QIFK. Residue arginine 226 participates in L-aspartate binding. ATP is bound by residues 226-228 and glutamine 235; that span reads RDE. Histidine 454 lines the L-aspartate pocket. Glutamate 488 is a binding site for ATP. L-aspartate is bound at residue arginine 495. 540-543 lines the ATP pocket; the sequence is GLDR.

It belongs to the class-II aminoacyl-tRNA synthetase family. Type 1 subfamily. As to quaternary structure, homodimer.

It localises to the cytoplasm. The enzyme catalyses tRNA(Asp) + L-aspartate + ATP = L-aspartyl-tRNA(Asp) + AMP + diphosphate. Functionally, catalyzes the attachment of L-aspartate to tRNA(Asp) in a two-step reaction: L-aspartate is first activated by ATP to form Asp-AMP and then transferred to the acceptor end of tRNA(Asp). This Clostridium beijerinckii (strain ATCC 51743 / NCIMB 8052) (Clostridium acetobutylicum) protein is Aspartate--tRNA ligase.